Reading from the N-terminus, the 38-residue chain is Cytochrome b6-f complex subunit 5 (38 aa).

Residues 5–25 (LLLGIVLGLIPITLAGLFVAA) traverse the membrane as a helical segment.

This sequence belongs to the PetG family. The 4 large subunits of the cytochrome b6-f complex are cytochrome b6, subunit IV (17 kDa polypeptide, PetD), cytochrome f and the Rieske protein, while the 4 small subunits are PetG, PetL, PetM and PetN. The complex functions as a dimer.

The protein localises to the cellular thylakoid membrane. In terms of biological role, component of the cytochrome b6-f complex, which mediates electron transfer between photosystem II (PSII) and photosystem I (PSI), cyclic electron flow around PSI, and state transitions. PetG is required for either the stability or assembly of the cytochrome b6-f complex. The chain is Cytochrome b6-f complex subunit 5 from Rippkaea orientalis (strain PCC 8801 / RF-1) (Cyanothece sp. (strain PCC 8801)).